Reading from the N-terminus, the 305-residue chain is Olfactory receptor 4X1 (305 aa).

Residues methionine 1–arginine 23 are Extracellular-facing. Asparagine 6 and asparagine 18 each carry an N-linked (GlcNAc...) asparagine glycan. A helical membrane pass occupies residues valine 24–isoleucine 47. The Cytoplasmic portion of the chain corresponds to leucine 48–serine 55. A helical membrane pass occupies residues proline 56–proline 77. Over lysine 78–glutamine 98 the chain is Extracellular. Cysteine 95 and cysteine 187 are joined by a disulfide. A helical membrane pass occupies residues methionine 99–tyrosine 118. Topologically, residues aspartate 119 to arginine 137 are cytoplasmic. The helical transmembrane segment at methionine 138 to glycine 156 threads the bilayer. Topologically, residues glutamine 157–isoleucine 193 are extracellular. The helical transmembrane segment at serine 194–leucine 217 threads the bilayer. Residues isoleucine 218 to lysine 233 lie on the Cytoplasmic side of the membrane. Residues alanine 234–tyrosine 256 traverse the membrane as a helical segment. The Extracellular segment spans residues isoleucine 257–lysine 267. Residues isoleucine 268–phenylalanine 287 traverse the membrane as a helical segment. The Cytoplasmic portion of the chain corresponds to arginine 288–isoleucine 305.

It belongs to the G-protein coupled receptor 1 family.

Its subcellular location is the cell membrane. Its function is as follows. Odorant receptor. This is Olfactory receptor 4X1 (OR4X1) from Homo sapiens (Human).